The chain runs to 75 residues: U6-lycotoxin-Ls1a (75 aa).

A signal peptide spans 1-21 (MKLLLFTALVLVVISLIEVEA). Positions 22-25 (ENER) are excised as a propeptide.

It belongs to the neurotoxin 19 (CSTX) family. 06 (U6-Lctx) subfamily. In terms of processing, contains 4 disulfide bonds. In terms of tissue distribution, expressed by the venom gland.

Its subcellular location is the secreted. The chain is U6-lycotoxin-Ls1a from Lycosa singoriensis (Wolf spider).